Consider the following 168-residue polypeptide: MGWSQRLFGVIRRALSKEVKEQVGTDRFGNKYYYIPEYKNWRGQTIREKRIVEAANKSEIDYEVGDIPTEWEAWIRKTRQTPPTMEEIMKNEKCREEIQMKSQDFYEKEKLLQEESNKELPPPVQTQIKGHASAPYFGKDEPSESPTSTGKTFQPGSWMPHGDKGHSQ.

The span at 108–118 shows a compositional bias: basic and acidic residues; the sequence is KEKLLQEESNK. The tract at residues 108-168 is disordered; the sequence is KEKLLQEESN…MPHGDKGHSQ (61 aa). Position 133 is a phosphoserine (Ser133). The span at 144–155 shows a compositional bias: polar residues; the sequence is ESPTSTGKTFQP.

This sequence belongs to the complex I NDUFA12 subunit family. As to quaternary structure, interacts with ARMC9.

Its subcellular location is the mitochondrion. Functionally, acts as a molecular chaperone for mitochondrial complex I assembly. Complex I functions in the transfer of electrons from NADH to the respiratory chain. The immediate electron acceptor for the enzyme is believed to be ubiquinone. Is involved in the initial steps of cilia formation, including removal of CP110 from the mother centrioles, docking of membrane vesicles to the mother centrioles, and establishment of the transition zone. In Bos taurus (Bovine), this protein is NADH dehydrogenase [ubiquinone] 1 alpha subcomplex assembly factor 2 (NDUFAF2).